A 189-amino-acid polypeptide reads, in one-letter code: Chitin synthase 1 (189 aa).

The protein belongs to the chitin synthase family. Class I subfamily.

It is found in the cell membrane. The enzyme catalyses [(1-&gt;4)-N-acetyl-beta-D-glucosaminyl](n) + UDP-N-acetyl-alpha-D-glucosamine = [(1-&gt;4)-N-acetyl-beta-D-glucosaminyl](n+1) + UDP + H(+). Polymerizes chitin, a structural polymer of the cell wall and septum, by transferring the sugar moiety of UDP-GlcNAc to the non-reducing end of the growing chitin polymer. This chain is Chitin synthase 1 (chs1), found in Aspergillus niger.